Here is a 575-residue protein sequence, read N- to C-terminus: DNA polymerase (575 aa).

A 3'-5' exonuclease and strand displacement activities region spans residues 1–191 (MKHMPRKMYS…KQGLDRMTAG (191 aa)). Residues Asp145 and Asp169 each contribute to the Mg(2+) site. The interval 192–229 (SDSLKGFKDIITTKKFKKVFPTLSLGLDKEVRYAYRGG) is involved in DNA-binding, coordination between DNA synthesis and degradation and TP interaction. An initiation, polymerization and pyrophosphorolytic activities region spans residues 230–562 (FTWLNDRFKE…KMKPKPVQVP (333 aa)). Mg(2+)-binding residues include Asp249 and Val250. Positions 254, 371, and 383 each coordinate 5-methyl-UTP. Residues 398-420 (DVTGKVPYLKENGALGFRLGEEE) form a TPR2 region. The YCDTD motif lies at 454-458 (YCDTD). 2 residues coordinate Mg(2+): Asp456 and Asp458. Asp458 is a 5-methyl-UTP binding site. The tract at residues 563–575 (GGVVLVDDTFTIK) is involved in DNA-binding and TP interaction.

This sequence belongs to the DNA polymerase type-B family. As to quaternary structure, interacts with the primer terminal protein; this interaction allows the initiation of TP-primed DNA replication at both viral DNA ends. Interacts with DNA. Requires Mg(2+) as cofactor.

It carries out the reaction DNA(n) + a 2'-deoxyribonucleoside 5'-triphosphate = DNA(n+1) + diphosphate. Polymerase responsible for protein-primed viral DNA replication by strand displacement with high processivity and fidelity. To start replication, the DNA polymerase forms a heterodimer with a free primer terminal protein (TP), recognizes the replication origins at both 5' ends of the linear chromosome, and initiates replication using as primer the OH-group of Ser-232 of the TP. This polymerase possesses three enzymatic activities: DNA synthesis (polymerase), primer terminal protein (TP) deoxynucleotidylation, which is the formation of a covalent linkage (phosphoester) between the hydroxyl group of a specific serine residue in TP and 5'-dAMP, a reaction directed by the second T at the 3' end, and 3' to 5' exonuclease activity. Exonuclease activity has a proofreading purpose. DNA polymerase edits the polymerization errors using an intramolecular pathway as the primer terminus travels from one active site to the other without dissociation from the DNA. DNA polymerization catalyzed by the DNA polymerase is a highly accurate process, but the protein-primed initiation is a quite inaccurate reaction. Since the polymerase initiates the replication on the second thymine, the TP-dAMP initiation product translocates backwards to recover the template information of the first nucleotide (sliding back-mechanism). The polypeptide is DNA polymerase (2) (Bacillus subtilis (Bacteriophage phi-29)).